We begin with the raw amino-acid sequence, 275 residues long: Large ribosomal subunit protein uL2c (275 aa).

The interval 225–252 (MNPCDHPHGGGEGRSPIGRAKPVTPWGK) is disordered.

This sequence belongs to the universal ribosomal protein uL2 family. In terms of assembly, part of the 50S ribosomal subunit.

It localises to the plastid. The protein resides in the chloroplast. This chain is Large ribosomal subunit protein uL2c (rpl2), found in Guillardia theta (Cryptophyte).